We begin with the raw amino-acid sequence, 215 residues long: Ependymin-2 (215 aa).

The signal sequence occupies residues 1–20; the sequence is MHTVKLLCVVFSCLCAVAWA. N71 and N94 each carry an N-linked (GlcNAc...) asparagine glycan.

Belongs to the ependymin family. In terms of assembly, forms disulfide-linked dimers. Post-translationally, different glycosylation variants are known as EPD-beta and EPD-gamma. In terms of processing, binds calcium through the terminal sialic acids. As to expression, EPDs are synthesized in the meninx and secreted in the cerebrospinal fluid.

It is found in the secreted. In terms of biological role, may play a role in neural plasticity. May be involved during axon regeneration. The protein is Ependymin-2 (epd2) of Carassius auratus (Goldfish).